The chain runs to 1404 residues: DNA-directed RNA polymerase subunit beta' (1404 aa).

The Zn(2+) site is built by C72, C74, C87, and C90. Mg(2+) is bound by residues D462, D464, and D466. 4 residues coordinate Zn(2+): C816, C890, C897, and C900.

This sequence belongs to the RNA polymerase beta' chain family. As to quaternary structure, the RNAP catalytic core consists of 2 alpha, 1 beta, 1 beta' and 1 omega subunit. When a sigma factor is associated with the core the holoenzyme is formed, which can initiate transcription. Mg(2+) serves as cofactor. The cofactor is Zn(2+).

The enzyme catalyses RNA(n) + a ribonucleoside 5'-triphosphate = RNA(n+1) + diphosphate. Functionally, DNA-dependent RNA polymerase catalyzes the transcription of DNA into RNA using the four ribonucleoside triphosphates as substrates. This chain is DNA-directed RNA polymerase subunit beta', found in Azoarcus sp. (strain BH72).